The sequence spans 1264 residues: ATP-dependent helicase/nuclease subunit A (1264 aa).

Positions 12–482 (EQFTDSQWQA…IILAENFRSR (471 aa)) constitute a UvrD-like helicase ATP-binding domain. ATP is bound at residue 33–40 (ASAGSGKT). The UvrD-like helicase C-terminal domain maps to 520 to 808 (SEAADYSTEL…RVMTIHASKG (289 aa)).

It belongs to the helicase family. AddA subfamily. Heterodimer of AddA and AddB/RexB. The cofactor is Mg(2+).

It carries out the reaction Couples ATP hydrolysis with the unwinding of duplex DNA by translocating in the 3'-5' direction.. The enzyme catalyses ATP + H2O = ADP + phosphate + H(+). Functionally, the heterodimer acts as both an ATP-dependent DNA helicase and an ATP-dependent, dual-direction single-stranded exonuclease. Recognizes the chi site generating a DNA molecule suitable for the initiation of homologous recombination. The AddA nuclease domain is required for chi fragment generation; this subunit has the helicase and 3' -&gt; 5' nuclease activities. This Enterococcus faecalis (strain ATCC 700802 / V583) protein is ATP-dependent helicase/nuclease subunit A.